A 704-amino-acid chain; its full sequence is DNA-binding protein RFX2 (704 aa).

A disordered region spans residues 1–39; sequence MQNSEGGADSPASVALRPSAAAPPVPASPQRVLVQAASS. The segment covering 10–20 has biased composition (low complexity); the sequence is SPASVALRPSA. S28 carries the post-translational modification Phosphoserine. Residues 199 to 274 constitute a DNA-binding region (RFX-type winged-helix); the sequence is HLQWLLDNYE…YHYYGIRLKP (76 aa). The segment at 292-334 is disordered; it reads QQPMHQKPRYRPAQKTDSLGDSSSHSGLHSTPEQTTAAQNQHH. Over residues 307-334 the composition is skewed to low complexity; that stretch reads TDSLGDSSSHSGLHSTPEQTTAAQNQHH. Residue S416 is modified to Phosphoserine.

This sequence belongs to the RFX family. As to quaternary structure, homodimer; probably only forms homodimers in testis. Heterodimer; heterodimerizes with RFX1 and RFX3.

It is found in the nucleus. It localises to the cytoplasm. Functionally, transcription factor that acts as a key regulator of spermatogenesis. Acts by regulating expression of genes required for the haploid phase during spermiogenesis, such as genes required for cilium assembly and function. Recognizes and binds the X-box, a regulatory motif with DNA sequence 5'-GTNRCC(0-3N)RGYAAC-3' present on promoters. Probably activates transcription of the testis-specific histone gene H1-6. This chain is DNA-binding protein RFX2 (RFX2), found in Pongo abelii (Sumatran orangutan).